A 132-amino-acid polypeptide reads, in one-letter code: Translation initiation factor 2 subunit beta (132 aa).

The interval 1–30 (MDYEEQLDRAMDEKPDVTGSETRFEVPDPN) is disordered.

This sequence belongs to the eIF-2-beta/eIF-5 family. Heterotrimer composed of an alpha, a beta and a gamma chain.

Functionally, eIF-2 functions in the early steps of protein synthesis by forming a ternary complex with GTP and initiator tRNA. The chain is Translation initiation factor 2 subunit beta from Halobacterium salinarum (strain ATCC 29341 / DSM 671 / R1).